The following is a 62-amino-acid chain: Large ribosomal subunit protein bL28 (62 aa).

The protein belongs to the bacterial ribosomal protein bL28 family.

The polypeptide is Large ribosomal subunit protein bL28 (Carboxydothermus hydrogenoformans (strain ATCC BAA-161 / DSM 6008 / Z-2901)).